Here is a 186-residue protein sequence, read N- to C-terminus: Peptidyl-tRNA hydrolase (186 aa).

Tyr-14 lines the tRNA pocket. The active-site Proton acceptor is His-19. Tyr-61, Asn-63, and Asn-107 together coordinate tRNA.

This sequence belongs to the PTH family. In terms of assembly, monomer.

It is found in the cytoplasm. The catalysed reaction is an N-acyl-L-alpha-aminoacyl-tRNA + H2O = an N-acyl-L-amino acid + a tRNA + H(+). Functionally, hydrolyzes ribosome-free peptidyl-tRNAs (with 1 or more amino acids incorporated), which drop off the ribosome during protein synthesis, or as a result of ribosome stalling. Catalyzes the release of premature peptidyl moieties from peptidyl-tRNA molecules trapped in stalled 50S ribosomal subunits, and thus maintains levels of free tRNAs and 50S ribosomes. The chain is Peptidyl-tRNA hydrolase from Helicobacter pylori (strain HPAG1).